The following is a 351-amino-acid chain: Transcription elongation factor A N-terminal and central domain-containing protein (351 aa).

One can recognise a TFIIS N-terminal domain in the interval 5 to 82 (NQIAARASLI…SKWKAVYKQT (78 aa)). Disordered stretches follow at residues 86–119 (ARNS…GICS) and 144–169 (LKPK…LLDP). Residues 103 to 119 (SGPSHDPSQNETLGICS) are compositionally biased toward polar residues. Residues 145–165 (KPKEEHFGDGDPESTGKRSSE) are compositionally biased toward basic and acidic residues. Positions 173-289 (MRTKCIELLY…EHYLPQVIDG (117 aa)) constitute a TFIIS central domain.

The chain is Transcription elongation factor A N-terminal and central domain-containing protein (TCEANC) from Homo sapiens (Human).